A 320-amino-acid polypeptide reads, in one-letter code: Malate dehydrogenase (320 aa).

Residues 10–15 (GSGMIG) and Asp-34 each bind NAD(+). Substrate contacts are provided by Arg-83 and Arg-89. NAD(+)-binding positions include Asn-96 and 119–121 (ITN). Substrate is bound by residues Asn-121 and Arg-152. The active-site Proton acceptor is the His-176.

This sequence belongs to the LDH/MDH superfamily. MDH type 3 family.

The enzyme catalyses (S)-malate + NAD(+) = oxaloacetate + NADH + H(+). In terms of biological role, catalyzes the reversible oxidation of malate to oxaloacetate. The polypeptide is Malate dehydrogenase (Brucella melitensis biotype 2 (strain ATCC 23457)).